The following is a 364-amino-acid chain: Methylthioribose-1-phosphate isomerase (364 aa).

Substrate is bound by residues 53 to 55 (RGA), Arg-90, and Gln-203. The Proton donor role is filled by Asp-244. 254 to 255 (NK) contributes to the substrate binding site.

The protein belongs to the eIF-2B alpha/beta/delta subunits family. MtnA subfamily.

The catalysed reaction is 5-(methylsulfanyl)-alpha-D-ribose 1-phosphate = 5-(methylsulfanyl)-D-ribulose 1-phosphate. It functions in the pathway amino-acid biosynthesis; L-methionine biosynthesis via salvage pathway; L-methionine from S-methyl-5-thio-alpha-D-ribose 1-phosphate: step 1/6. Its function is as follows. Catalyzes the interconversion of methylthioribose-1-phosphate (MTR-1-P) into methylthioribulose-1-phosphate (MTRu-1-P). The polypeptide is Methylthioribose-1-phosphate isomerase (Brucella anthropi (strain ATCC 49188 / DSM 6882 / CCUG 24695 / JCM 21032 / LMG 3331 / NBRC 15819 / NCTC 12168 / Alc 37) (Ochrobactrum anthropi)).